Here is a 446-residue protein sequence, read N- to C-terminus: tRNA modification GTPase MnmE (446 aa).

3 residues coordinate (6S)-5-formyl-5,6,7,8-tetrahydrofolate: R24, E81, and K120. The region spanning 216-368 (GLHAVLIGPP…LHIRLRELAL (153 aa)) is the TrmE-type G domain. N226 contributes to the K(+) binding site. GTP-binding positions include 226 to 231 (NAGKSS), 245 to 251 (TDVAGTT), and 270 to 273 (DTAG). Residue S230 coordinates Mg(2+). 3 residues coordinate K(+): T245, V247, and T250. T251 is a binding site for Mg(2+). Residue K446 coordinates (6S)-5-formyl-5,6,7,8-tetrahydrofolate.

The protein belongs to the TRAFAC class TrmE-Era-EngA-EngB-Septin-like GTPase superfamily. TrmE GTPase family. As to quaternary structure, homodimer. Heterotetramer of two MnmE and two MnmG subunits. It depends on K(+) as a cofactor.

The protein localises to the cytoplasm. Its function is as follows. Exhibits a very high intrinsic GTPase hydrolysis rate. Involved in the addition of a carboxymethylaminomethyl (cmnm) group at the wobble position (U34) of certain tRNAs, forming tRNA-cmnm(5)s(2)U34. The protein is tRNA modification GTPase MnmE of Xanthomonas oryzae pv. oryzae (strain PXO99A).